Here is a 368-residue protein sequence, read N- to C-terminus: tRNA-specific 2-thiouridylase MnmA (368 aa).

ATP-binding positions include 12-19 and Met-38; that span reads AMSGGVDS. Cys-110 serves as the catalytic Nucleophile. Cys-110 and Cys-207 are disulfide-bonded. Position 134 (Gly-134) interacts with ATP. The tract at residues 157 to 159 is interaction with tRNA; that stretch reads KDQ. Catalysis depends on Cys-207, which acts as the Cysteine persulfide intermediate. The segment at 312-313 is interaction with tRNA; the sequence is RY.

This sequence belongs to the MnmA/TRMU family.

The protein resides in the cytoplasm. The enzyme catalyses S-sulfanyl-L-cysteinyl-[protein] + uridine(34) in tRNA + AH2 + ATP = 2-thiouridine(34) in tRNA + L-cysteinyl-[protein] + A + AMP + diphosphate + H(+). Functionally, catalyzes the 2-thiolation of uridine at the wobble position (U34) of tRNA, leading to the formation of s(2)U34. The chain is tRNA-specific 2-thiouridylase MnmA from Geobacter metallireducens (strain ATCC 53774 / DSM 7210 / GS-15).